A 283-amino-acid polypeptide reads, in one-letter code: NFU1 iron-sulfur cluster scaffold homolog, mitochondrial (283 aa).

A mitochondrion-targeting transit peptide spans 1–30; sequence MSKFLSQAALNTLRNTRLGSRQLVRSFAGI. The nifU stretch occupies residues 182–250; the sequence is IKELLDTRIR…IPEVESVEQV (69 aa). The [4Fe-4S] cluster site is built by cysteine 219 and cysteine 222.

Belongs to the NifU family.

It is found in the mitochondrion. In terms of biological role, molecular scaffold for [Fe-S] cluster assembly of mitochondrial iron-sulfur proteins. This Drosophila erecta (Fruit fly) protein is NFU1 iron-sulfur cluster scaffold homolog, mitochondrial.